We begin with the raw amino-acid sequence, 1461 residues long: Formin-3 (1461 aa).

Disordered stretches follow at residues 1-67 (MASK…SDDN) and 431-457 (YREE…RPTT). Positions 12–28 (TSRSIQSRNSSYSTSSN) are enriched in low complexity. Polar residues-rich tracts occupy residues 29-53 (ERIG…STND) and 438-457 (PHGN…RPTT). Positions 92–508 (SETEQLRKIY…KIQKSMQLLT (417 aa)) constitute a GBD/FH3 domain. Residues 137–515 (QHTVLDEATY…LLTHTLEALE (379 aa)) are interaction with tea4. Residues 540-639 (GTAEEIAEYK…VQNSNEQHLQ (100 aa)) adopt a coiled-coil conformation. Positions 683–811 (GIPVRVHTPS…EPKIDETSLT (129 aa)) are disordered. Low complexity predominate over residues 700–718 (SFSGSEISSSPSPLLPDVS). Positions 731 to 784 (SPPPPPPAVIVPTPAPAPIPVPPPAPIMGGPPPPPPPPGVAGAGPPPPPPPPPA) are enriched in pro residues. The segment covering 801–811 (PEPKIDETSLT) has biased composition (basic and acidic residues). In terms of domain architecture, FH2 spans 845 to 1257 (LRDLHKPTRP…RIMSEDRDKL (413 aa)). Disordered regions lie at residues 1268–1337 (AKYR…AEEK) and 1416–1461 (ERLQ…RQKQ). 2 stretches are compositionally biased toward basic and acidic residues: residues 1273-1315 (KREL…KTGD) and 1325-1337 (MEDL…AEEK). Residues 1445-1454 (TNGSNASNLV) are compositionally biased toward polar residues.

It belongs to the formin homology family. Interacts with rax2, rho3 and tea4. Interacts with tea1 in the presence of tea4.

Its subcellular location is the cytoplasm. It localises to the cell cortex. The protein localises to the cell tip. In terms of biological role, involved in controlling polarized cell growth. Required for interphase actin cable formation and microtubule organization. This is Formin-3 (for3) from Schizosaccharomyces pombe (strain 972 / ATCC 24843) (Fission yeast).